The following is a 1647-amino-acid chain: Cortactin-binding protein 2 (1647 aa).

Disordered stretches follow at residues 1–27 (MATDGASCEPDASRAPEEAAGATAEAA), 202–222 (EKKKTNELEEELSAEKRRSTE), 318–427 (HVKK…QPGL), 440–468 (GNANDPDQNGNTTQSPPSRDVSPTSRDNL), and 482–604 (LSRF…PSID). Residues 120 to 276 (KMQERMATQL…EQLKRGSDSK (157 aa)) adopt a coiled-coil conformation. A compositionally biased stretch (low complexity) spans 362–372 (SSAPSLPPASA). Polar residues predominate over residues 379-388 (GPSTGSTADL). The span at 389-411 (PSSTAPAPGSAAQSPVAAALGPA) shows a compositional bias: low complexity. The span at 440-466 (GNANDPDQNGNTTQSPPSRDVSPTSRD) shows a compositional bias: polar residues. Arg-484 carries the post-translational modification Asymmetric dimethylarginine. Residues 488-509 (PAVGAAPRPGAPPTGDAGAYPP) show a composition bias toward low complexity. The span at 569–579 (TVASPPSSLPQ) shows a compositional bias: polar residues. ANK repeat units follow at residues 695-725 (GRPTLLQQAAAQGNVTLLSMLLNEEGLDINY), 729-758 (DGHSALYSAAKNGHTDCVRLLLNAEAQVNA), 762-791 (NGFTPLCAAAAQGHFECVELLIAYDANINH), 795-824 (GGQTPLYLACKNGNKECIKLLLEAGTDRSV), and 828-857 (DGWTPVHAAVDTGNVDSLKLLMYHRAPAHG). The disordered stretch occupies residues 856–886 (HGNSLNEEEPESDVSDLDDGEESSEGESKPV). Acidic residues predominate over residues 861–880 (NEEEPESDVSDLDDGEESSE). The stretch at 898-928 (EGWTAAHIAASKGFKNCLEILCRHRGLEPER) is one ANK 6 repeat. The tract at residues 1436-1467 (ENGAWRKVNTSPRRKSGRFSSPTWNKPDLSNE) is disordered. The residue at position 1509 (Ser-1509) is a Phosphoserine. The interval 1542–1647 (RTFDSSGNNP…HKNEQTHRKT (106 aa)) is disordered. Polar residues-rich tracts occupy residues 1544 to 1559 (FDSSGNNPAFSATVNN) and 1567 to 1584 (KEVSPLSSHQTTECSNNK). Residues 1609 to 1623 (SQNTKRSSSSSNTRQ) show a composition bias toward low complexity. Residues 1630–1647 (SKEENWNLHKNEQTHRKT) are compositionally biased toward basic and acidic residues.

Interacts with CTTN/cortactin SH3 domain. Interacts with STRN, STRN4/zinedin and MOB4/phocein; this interactions mediate the association with the STRIPAK core complex and may regulate dendritic spine distribution of the STRIPAK complex in hippocampal neurons. Activation of glutamate receptors weakens the interaction with STRN and STRN4.

The protein localises to the cytoplasm. Its subcellular location is the cell cortex. It is found in the cell projection. It localises to the dendritic spine. Functionally, regulates the dendritic spine distribution of CTTN/cortactin in hippocampal neurons, and thus controls dendritic spinogenesis and dendritic spine maintenance. Associates with the striatin-interacting phosphatase and kinase (STRIPAK) core complex to regulate dendritic spine distribution of the STRIPAK complex in hippocampal neurons. This Microcebus murinus (Gray mouse lemur) protein is Cortactin-binding protein 2 (CTTNBP2).